We begin with the raw amino-acid sequence, 911 residues long: MEELQDDYEDMMEENLEQEEYEDPDIPESQMEEPAAHDTEATATDYHTTSHPGTHKVYVELQELVMDEKNQELRWMEAARWVQLEENLGENGAWGRPHLSHLTFWSLLELRRVFTKGTVLLDLQETSLAGVANQLLDRFIFEDQIRPQDREELLRALLLKHSHAGELEALGGVKPAVLTRSGDPSQPLLPQHSSLETQLFCEQGDGGTEGHSPSGILEKIPPDSEATLVLVGRADFLEQPVLGFVRLQEAAELEAVELPVPIRFLFVLLGPEAPHIDYTQLGRAAATLMSERVFRIDAYMAQSRGELLHSLEGFLDCSLVLPPTDAPSEQALLSLVPVQRELLRRRYQSSPAKPDSSFYKGLDLNGGPDDPLQQTGQLFGGLVRDIRRRYPYYLSDITDAFSPQVLAAVIFIYFAALSPAITFGGLLGEKTRNQMGVSELLISTAVQGILFALLGAQPLLVVGFSGPLLVFEEAFFSFCETNGLEYIVGRVWIGFWLILLVVLVVAFEGSFLVRFISRYTQEIFSFLISLIFIYETFSKLIKIFQDHPLQKTYNYNVLMVPKPQGPLPNTALLSLVLMAGTFFFAMMLRKFKNSSYFPGKLRRVIGDFGVPISILIMVLVDFFIQDTYTQKLSVPDGFKVSNSSARGWVIHPLGLRSEFPIWMMFASALPALLVFILIFLESQITTLIVSKPERKMVKGSGFHLDLLLVVGMGGVAALFGMPWLSATTVRSVTHANALTVMGKASTPGAAAQIQEVKEQRISGLLVAVLVGLSILMEPILSRIPLAVLFGIFLYMGVTSLSGIQLFDRILLLFKPPKYHPDVPYVKRVKTWRMHLFTGIQIICLAVLWVVKSTPASLALPFVLILTVPLRRVLLPLIFRNVELQCLDADDAKATFDEEEGRDEYDEVAMPV.

Met1 carries the N-acetylmethionine modification. Residues 1–26 show a composition bias toward acidic residues; sequence MEELQDDYEDMMEENLEQEEYEDPDI. Residues 1–40 are disordered; the sequence is MEELQDDYEDMMEENLEQEEYEDPDIPESQMEEPAAHDTE. The Cytoplasmic portion of the chain corresponds to 1–403; sequence MEELQDDYED…LSDITDAFSP (403 aa). Phosphotyrosine is present on residues Tyr8, Tyr21, and Tyr46. Residues 13–31 are (Microbial infection) Interaction with P.falciparum (isolate K1) FBPA; that stretch reads EENLEQEEYEDPDIPESQM. Positions 55-290 are globular; that stretch reads HKVYVELQEL…LGRAAATLMS (236 aa). An interaction with ANK1 region spans residues 176-185; sequence AVLTRSGDPS. A phosphoserine mark is found at Ser185 and Ser350. The tract at residues 304–357 is dimerization arm; it reads RGELLHSLEGFLDCSLVLPPTDAPSEQALLSLVPVQRELLRRRYQSSPAKPDSS. Position 359 is a phosphotyrosine (Tyr359). The helical transmembrane segment at 404–427 threads the bilayer; it reads QVLAAVIFIYFAALSPAITFGGLL. Topologically, residues 428–435 are extracellular; it reads GEKTRNQM. A helical membrane pass occupies residues 436 to 456; sequence GVSELLISTAVQGILFALLGA. Residues 457-459 are Cytoplasmic-facing; that stretch reads QPL. Residues 460–476 form a discontinuously helical membrane-spanning segment; that stretch reads LVVGFSGPLLVFEEAFF. Topologically, residues 477–485 are extracellular; that stretch reads SFCETNGLE. The chain crosses the membrane as a helical span at residues 486-506; it reads YIVGRVWIGFWLILLVVLVVA. Topologically, residues 507 to 518 are cytoplasmic; it reads FEGSFLVRFISR. The helical transmembrane segment at 519–541 threads the bilayer; it reads YTQEIFSFLISLIFIYETFSKLI. Residues 542–570 lie on the Extracellular side of the membrane; the sequence is KIFQDHPLQKTYNYNVLMVPKPQGPLPNT. The segment at 559–630 is involved in anion transport; it reads MVPKPQGPLP…DFFIQDTYTQ (72 aa). A helical transmembrane segment spans residues 571-591; sequence ALLSLVLMAGTFFFAMMLRKF. Residues 592 to 602 lie on the Cytoplasmic side of the membrane; the sequence is KNSSYFPGKLR. A helical membrane pass occupies residues 603-623; sequence RVIGDFGVPISILIMVLVDFF. Residues 624–663 lie on the Extracellular side of the membrane; the sequence is IQDTYTQKLSVPDGFKVSNSSARGWVIHPLGLRSEFPIWM. N-linked (GlcNAc...) (complex) asparagine glycosylation occurs at Asn642. The helical transmembrane segment at 664–684 threads the bilayer; sequence MFASALPALLVFILIFLESQI. At 685-700 the chain is on the cytoplasmic side; that stretch reads TTLIVSKPERKMVKGS. The chain crosses the membrane as a helical span at residues 701–719; sequence GFHLDLLLVVGMGGVAALF. Residues 720-737 traverse the membrane as a discontinuously helical segment; sequence GMPWLSATTVRSVTHANA. The tract at residues 720 to 761 is (Microbial infection) 5ABC region; interaction with P.falciparum (isolate 3D7) MSP9; the sequence is GMPWLSATTVRSVTHANALTVMGKASTPGAAAQIQEVKEQRI. The Cytoplasmic portion of the chain corresponds to 738-760; that stretch reads LTVMGKASTPGAAAQIQEVKEQR. A run of 2 helical transmembrane segments spans residues 761–781 and 782–800; these read ISGL…PILS and RIPL…VTSL. The Cytoplasmic portion of the chain corresponds to 801–838; the sequence is SGIQLFDRILLLFKPPKYHPDVPYVKRVKTWRMHLFTG. An intramembrane region (discontinuously helical) is located at residues 839 to 869; it reads IQIICLAVLWVVKSTPASLALPFVLILTVPL. A lipid anchor (S-palmitoyl cysteine) is attached at Cys843. At 870-911 the chain is on the cytoplasmic side; sequence RRVLLPLIFRNVELQCLDADDAKATFDEEEGRDEYDEVAMPV. Position 904 is a phosphotyrosine (Tyr904).

Belongs to the anion exchanger (TC 2.A.31) family. A dimer in solution, but in its membrane environment, it exists primarily as a mixture of dimers and tetramers and spans the membrane asymmetrically. Component of the ankyrin-1 complex in the erythrocyte, composed of ANK1, RHCE, RHAG, SLC4A1, EPB42, GYPA, GYPB and AQP1. Interacts with STOM; this interaction positively regulates SLC4A1 activity. Interacts with GYPA; a GYPA monomer is bound at each end of the SLC4A1 dimer forming a heterotetramer. Three SLC4A1 dimers (Band 3-I, Band 3-II and Band 3-III) participates in the ankyrin-1 complex. Interacts (via the cytoplasmic domain) with EPB42; this interaction is mediated by the SLC4A1 Band 3-I dimer. Interacts (via the cytoplasmic domain) directly with ANK1; this interaction is mediated by the SLC4A1 Band 3-II and Band 3-III dimers. In terms of assembly, interacts with TMEM139. As to quaternary structure, (Microbial infection) Interacts (via N-terminus) with P.falciparum (isolate K1) aldolase FBPA; the interaction inhibits FBPA catalytic activity. (Microbial infection) Interacts (via the 5ABC region) with P.falciparum (isolate 3D7) MSP9/ABRA (via N-terminus). In terms of assembly, (Microbial infection) Interacts (via the 5ABC region) with P.falciparum (isolate 3D7) MSP1 p42 subunit. In terms of processing, phosphorylated on Tyr-8 and Tyr-21 most likely by SYK. PP1-resistant phosphorylation that precedes Tyr-359 and Tyr-904 phosphorylation. Phosphorylated on Tyr-359 and Tyr-904 most likely by LYN. PP1-inhibited phosphorylation that follows Tyr-8 and Tyr-21 phosphorylation. Post-translationally, N-glycosylated. As to expression, detected in erythrocytes (at protein level). In terms of tissue distribution, expressed in kidney (at protein level).

Its subcellular location is the cell membrane. It is found in the basolateral cell membrane. It carries out the reaction hydrogencarbonate(in) + chloride(out) = hydrogencarbonate(out) + chloride(in). Its activity is regulated as follows. Phenyl isothiocyanate inhibits anion transport in vitro. Functions both as a transporter that mediates electroneutral anion exchange across the cell membrane and as a structural protein. Component of the ankyrin-1 complex of the erythrocyte membrane; required for normal flexibility and stability of the erythrocyte membrane and for normal erythrocyte shape via the interactions of its cytoplasmic domain with cytoskeletal proteins, glycolytic enzymes, and hemoglobin. Functions as a transporter that mediates the 1:1 exchange of inorganic anions across the erythrocyte membrane. Mediates chloride-bicarbonate exchange in the kidney, and is required for normal acidification of the urine. Its function is as follows. (Microbial infection) Acts as a receptor for P.falciparum (isolate 3D7) MSP9 and thus, facilitates merozoite invasion of erythrocytes. Acts as a receptor for P.falciparum (isolate 3D7) MSP1 and thus, facilitates merozoite invasion of erythrocytes. The chain is Band 3 anion transport protein from Homo sapiens (Human).